We begin with the raw amino-acid sequence, 154 residues long: Large ribosomal subunit protein uL13 (154 aa).

Belongs to the universal ribosomal protein uL13 family. In terms of assembly, part of the 50S ribosomal subunit.

This protein is one of the early assembly proteins of the 50S ribosomal subunit, although it is not seen to bind rRNA by itself. It is important during the early stages of 50S assembly. The sequence is that of Large ribosomal subunit protein uL13 from Rhizobium leguminosarum bv. trifolii (strain WSM2304).